We begin with the raw amino-acid sequence, 212 residues long: Large ribosomal subunit protein uL3 (212 aa).

Q153 is modified (N5-methylglutamine).

This sequence belongs to the universal ribosomal protein uL3 family. As to quaternary structure, part of the 50S ribosomal subunit. Forms a cluster with proteins L14 and L19. In terms of processing, methylated by PrmB.

In terms of biological role, one of the primary rRNA binding proteins, it binds directly near the 3'-end of the 23S rRNA, where it nucleates assembly of the 50S subunit. The sequence is that of Large ribosomal subunit protein uL3 from Idiomarina loihiensis (strain ATCC BAA-735 / DSM 15497 / L2-TR).